The sequence spans 202 residues: uncharacterized protein (202 aa).

Residues 1-6 (MITDFL) are Cytoplasmic-facing. The helical; Signal-anchor for type II membrane protein transmembrane segment at 7–23 (LAFSILAVSTTLGVSNL) threads the bilayer. At 24-202 (NKQCRDLLQC…KNGKTRGHSG (179 aa)) the chain is on the extracellular side. Asn-53 carries an N-linked (GlcNAc...) asparagine glycan.

The protein resides in the membrane. This is an uncharacterized protein from Caenorhabditis elegans.